The chain runs to 252 residues: 3-dehydroquinate dehydratase (252 aa).

Residues S21, 46 to 48 (EWR), and R82 each bind 3-dehydroquinate. H143 acts as the Proton donor/acceptor in catalysis. The active-site Schiff-base intermediate with substrate is K170. Residues R213, S232, and Q236 each contribute to the 3-dehydroquinate site.

The protein belongs to the type-I 3-dehydroquinase family. As to quaternary structure, dimer of dimers.

It catalyses the reaction 3-dehydroquinate = 3-dehydroshikimate + H2O. It functions in the pathway metabolic intermediate biosynthesis; chorismate biosynthesis; chorismate from D-erythrose 4-phosphate and phosphoenolpyruvate: step 3/7. Its activity is regulated as follows. Inhibited by (2R)-2-methyl-3-dehydroquinic acid. Functionally, involved in the third step of the chorismate pathway, which leads to the biosynthesis of aromatic amino acids. Catalyzes the cis-dehydration of 3-dehydroquinate (DHQ) and introduces the first double bond of the aromatic ring to yield 3-dehydroshikimate. The reaction involves the formation of an imine intermediate between the keto group of 3-dehydroquinate and the epsilon-amino group of Lys-170 at the active site. The polypeptide is 3-dehydroquinate dehydratase (Salmonella typhi).